The following is a 278-amino-acid chain: Large ribosomal subunit protein uL24m (278 aa).

Residues 109–142 form the KOW domain; the sequence is FFPGDLVQVMVGKDKGRQGLVLTISRDSSEVVVD.

This sequence belongs to the universal ribosomal protein uL24 family.

It localises to the mitochondrion. In Caenorhabditis briggsae, this protein is Large ribosomal subunit protein uL24m (mrpl-24).